We begin with the raw amino-acid sequence, 514 residues long: Bifunctional purine biosynthesis protein PurH (514 aa).

In terms of domain architecture, MGS-like spans 1 to 142 (MLALLSVSDK…KNFRHVSVVV (142 aa)).

Belongs to the PurH family.

The enzyme catalyses (6R)-10-formyltetrahydrofolate + 5-amino-1-(5-phospho-beta-D-ribosyl)imidazole-4-carboxamide = 5-formamido-1-(5-phospho-D-ribosyl)imidazole-4-carboxamide + (6S)-5,6,7,8-tetrahydrofolate. The catalysed reaction is IMP + H2O = 5-formamido-1-(5-phospho-D-ribosyl)imidazole-4-carboxamide. Its pathway is purine metabolism; IMP biosynthesis via de novo pathway; 5-formamido-1-(5-phospho-D-ribosyl)imidazole-4-carboxamide from 5-amino-1-(5-phospho-D-ribosyl)imidazole-4-carboxamide (10-formyl THF route): step 1/1. The protein operates within purine metabolism; IMP biosynthesis via de novo pathway; IMP from 5-formamido-1-(5-phospho-D-ribosyl)imidazole-4-carboxamide: step 1/1. The protein is Bifunctional purine biosynthesis protein PurH of Myxococcus xanthus (strain DK1622).